The primary structure comprises 78 residues: Small ribosomal subunit protein bS16c (78 aa).

This sequence belongs to the bacterial ribosomal protein bS16 family.

The protein localises to the plastid. Its subcellular location is the chloroplast. In Phaeodactylum tricornutum (strain CCAP 1055/1), this protein is Small ribosomal subunit protein bS16c.